The following is a 289-amino-acid chain: MYFQDIIQNLNKFWSEEGCLIMQPYDTEKGAGTMNPHTFLRAIGPEPWSVAYAEPCRRPTDGRFGDNPNRAQHYFQYQVIIKPSPDEIQEKYLTSLEFLGINPKDHDIRFVEDNWESPTLGAWGVGWEVWLDGMEVTQFTYFQQCGGIDCNPIPIEITYGLERIAMFLQDKESIWDLNWNKDINYSDIWLQFEKNQCSFNFSNSNPENMRKLFAIYQEEANSLIEKDLTYPALDFVLKCSHCFNLLDARGVISVTDRAQYIEKIRKLAREVATSWIKERELMNFPLVKK.

Belongs to the class-II aminoacyl-tRNA synthetase family. Tetramer of two alpha and two beta subunits.

It localises to the cytoplasm. The catalysed reaction is tRNA(Gly) + glycine + ATP = glycyl-tRNA(Gly) + AMP + diphosphate. The protein is Glycine--tRNA ligase alpha subunit of Prochlorococcus marinus subsp. pastoris (strain CCMP1986 / NIES-2087 / MED4).